A 387-amino-acid chain; its full sequence is Arrestin-C (387 aa).

It belongs to the arrestin family. Retina and pineal gland.

Functionally, may play a role in an as yet undefined retina-specific signal transduction. Could bind to photoactivated-phosphorylated red/green opsins. In Xenopus laevis (African clawed frog), this protein is Arrestin-C (arr3).